We begin with the raw amino-acid sequence, 179 residues long: Bifunctional protein PyrR (179 aa).

The PRPP-binding signature appears at 97–109 (VILIDDVLFTGRT).

The protein belongs to the purine/pyrimidine phosphoribosyltransferase family. PyrR subfamily.

The catalysed reaction is UMP + diphosphate = 5-phospho-alpha-D-ribose 1-diphosphate + uracil. Regulates the transcription of the pyrimidine nucleotide (pyr) operon in response to exogenous pyrimidines. In terms of biological role, also displays a weak uracil phosphoribosyltransferase activity which is not physiologically significant. This is Bifunctional protein PyrR from Actinobacillus pleuropneumoniae serotype 5b (strain L20).